The primary structure comprises 226 residues: uncharacterized protein (226 aa).

One can recognise a Response regulatory domain in the interval 1-112 (MLVEDDHSIS…ELTARVKAAI (112 aa)). At Asp48 the chain carries 4-aspartylphosphate. A DNA-binding region (ompR/PhoB-type) is located at residues 126 to 225 (NKVIRIHQLA…LWGIGYKLGE (100 aa)).

In terms of processing, phosphorylated by YcbM.

The protein localises to the cytoplasm. Functionally, member of the two-component regulatory system YcbM/YcbL. This is an uncharacterized protein from Bacillus subtilis (strain 168).